Here is a 602-residue protein sequence, read N- to C-terminus: Glutamyl-tRNA(Gln) amidotransferase subunit B, mitochondrial (602 aa).

A mitochondrion-targeting transit peptide spans 1–52 (MLQQWLRQSPAAAGLLRCSRYRGPQAALLQLSPQRAPTYHAIRSLQTSAAES). A disordered region spans residues 61-83 (QLKQGAKGLKAQKRQRRESEEAS).

It belongs to the GatB/GatE family. GatB subfamily. As to quaternary structure, subunit of the heterotrimeric GatCAB amidotransferase (AdT) complex, composed of A, B and C subunits.

Its subcellular location is the mitochondrion. The enzyme catalyses L-glutamyl-tRNA(Gln) + L-glutamine + ATP + H2O = L-glutaminyl-tRNA(Gln) + L-glutamate + ADP + phosphate + H(+). Its function is as follows. Allows the formation of correctly charged Gln-tRNA(Gln) through the transamidation of misacylated Glu-tRNA(Gln) in the mitochondria. The reaction takes place in the presence of glutamine and ATP through an activated gamma-phospho-Glu-tRNA(Gln). This is Glutamyl-tRNA(Gln) amidotransferase subunit B, mitochondrial from Aspergillus clavatus (strain ATCC 1007 / CBS 513.65 / DSM 816 / NCTC 3887 / NRRL 1 / QM 1276 / 107).